Here is a 323-residue protein sequence, read N- to C-terminus: Thiamine-monophosphate kinase (323 aa).

Mg(2+) contacts are provided by aspartate 30, serine 45, threonine 46, and aspartate 47. Histidine 54 contributes to the substrate binding site. Mg(2+) is bound by residues aspartate 75 and aspartate 122. ATP is bound by residues 121-122 (GD) and arginine 146. Residue aspartate 212 participates in Mg(2+) binding. Serine 214 is an ATP binding site. A Mg(2+)-binding site is contributed by aspartate 215. Substrate-binding residues include glutamate 263 and phenylalanine 319.

The protein belongs to the thiamine-monophosphate kinase family.

The catalysed reaction is thiamine phosphate + ATP = thiamine diphosphate + ADP. Its pathway is cofactor biosynthesis; thiamine diphosphate biosynthesis; thiamine diphosphate from thiamine phosphate: step 1/1. Functionally, catalyzes the ATP-dependent phosphorylation of thiamine-monophosphate (TMP) to form thiamine-pyrophosphate (TPP), the active form of vitamin B1. The polypeptide is Thiamine-monophosphate kinase (Buchnera aphidicola subsp. Schizaphis graminum (strain Sg)).